We begin with the raw amino-acid sequence, 506 residues long: Cysteine protease 1 (506 aa).

The segment at 1–21 is disordered; it reads MTSSRPSGRDSTGWQETVSNT. Catalysis depends on cysteine 226, which acts as the Nucleophile. Residues aspartate 399 and histidine 401 contribute to the active site.

Belongs to the peptidase C54 family.

The protein resides in the cytoplasm. Its subcellular location is the nucleus. It is found in the preautophagosomal structure. It carries out the reaction [protein]-C-terminal L-amino acid-glycyl-phosphatidylethanolamide + H2O = [protein]-C-terminal L-amino acid-glycine + a 1,2-diacyl-sn-glycero-3-phosphoethanolamine. Functionally, cysteine protease that plays a key role in cytoplasm to vacuole transport (Cvt) and autophagy by mediating both proteolytic activation and delipidation of ATG8. Required for selective autophagic degradation of the nucleus (nucleophagy) as well as for mitophagy which contributes to regulate mitochondrial quantity and quality by eliminating the mitochondria to a basal level to fulfill cellular energy requirements and preventing excess ROS production. The protease activity is required for proteolytic activation of ATG8: cleaves the C-terminal amino acid of ATG8 to reveal a C-terminal glycine. ATG8 ubiquitin-like activity requires the exposure of the glycine at the C-terminus for its conjugation to phosphatidylethanolamine (PE) and its insertion to membranes, which is necessary for autophagy. The ATG8-PE conjugate mediates tethering between adjacent membranes and stimulates membrane hemifusion, leading to expansion of the autophagosomal membrane during autophagy. In addition to the protease activity, also catalyzes deconjugation of PE-conjugated forms of ATG8 during macroautophagy: ATG8 delipidation is required to release the protein from membranes, which facilitates multiple events during macroautophagy, and especially for efficient autophagosome biogenesis, the assembly of ATG9-containing tubulovesicular clusters into phagophores/autophagosomes, and for the disassembly of PAS-associated ATG components. ATG8 delipidation by ATG4 also recycles ATG8-PE generated on inappropriate membranes to maintain a reservoir of unlipidated ATG8 that is required for autophagosome formation at the PAS. The protein is Cysteine protease 1 (cpr-1) of Neurospora crassa (strain ATCC 24698 / 74-OR23-1A / CBS 708.71 / DSM 1257 / FGSC 987).